The chain runs to 506 residues: Nucleoside import ATP-binding protein NupA (506 aa).

ABC transporter domains follow at residues 7–242 (IQMI…VGRS) and 259–503 (LEIK…VGGN). 39 to 46 (GENGAGKS) provides a ligand contact to ATP.

The protein belongs to the ABC transporter superfamily. As to quaternary structure, the complex is composed of two ATP-binding proteins (NupA), two transmembrane proteins (NupB and NupC) and a solute-binding protein (BmpA).

It is found in the cell membrane. In terms of biological role, part of an ABC transporter complex involved in the uptake of all common nucleosides. Responsible for energy coupling to the transport system. This Lactococcus lactis subsp. cremoris (strain MG1363) protein is Nucleoside import ATP-binding protein NupA.